The chain runs to 176 residues: MEELIAKRYAKALMESCSEKELQAIEDALVAIAALFRDWKVKEFIISPEVEKSAKEEILLAPFKDAGKKFVHLIKLLAEKDRLEIIPALANELKIQRALKERKFDGVVYSEFKLSDNELKKIAEALSKKVNGEVVLHQGKEPYDGIKVEVNTVGIEIEFSKSKIKKQLIENILKAI.

Belongs to the ATPase delta chain family. In terms of assembly, F-type ATPases have 2 components, F(1) - the catalytic core - and F(0) - the membrane proton channel. F(1) has five subunits: alpha(3), beta(3), gamma(1), delta(1), epsilon(1). F(0) has three main subunits: a(1), b(2) and c(10-14). The alpha and beta chains form an alternating ring which encloses part of the gamma chain. F(1) is attached to F(0) by a central stalk formed by the gamma and epsilon chains, while a peripheral stalk is formed by the delta and b chains.

Its subcellular location is the cell inner membrane. Its function is as follows. F(1)F(0) ATP synthase produces ATP from ADP in the presence of a proton or sodium gradient. F-type ATPases consist of two structural domains, F(1) containing the extramembraneous catalytic core and F(0) containing the membrane proton channel, linked together by a central stalk and a peripheral stalk. During catalysis, ATP synthesis in the catalytic domain of F(1) is coupled via a rotary mechanism of the central stalk subunits to proton translocation. Functionally, this protein is part of the stalk that links CF(0) to CF(1). It either transmits conformational changes from CF(0) to CF(1) or is implicated in proton conduction. The sequence is that of ATP synthase subunit delta from Nitratiruptor sp. (strain SB155-2).